We begin with the raw amino-acid sequence, 359 residues long: Guanine nucleotide-binding protein G(q) subunit alpha (359 aa).

Residues cysteine 9 and cysteine 10 are each lipidated (S-palmitoyl cysteine). The 322-residue stretch at 38-359 (RELKLLLLGT…QLNLKEYNLV (322 aa)) folds into the G-alpha domain. The interval 41-54 (KLLLLGTGESGKST) is G1 motif. Positions 50, 51, 52, 53, 54, 156, 180, 181, and 183 each coordinate GTP. Serine 53 lines the Mg(2+) pocket. Positions 178-186 (DVLRVRVPT) are G2 motif. A Mg(2+)-binding site is contributed by threonine 186. The tract at residues 201-210 (FRMVDVGGQR) is G3 motif. Glutamine 209 is subject to 5-glutamyl histamine. The interval 270-277 (ILFLNKKD) is G4 motif. Asparagine 274, lysine 275, aspartate 277, and alanine 331 together coordinate GTP. Residues 329 to 334 (TCATDT) form a G5 motif region.

This sequence belongs to the G-alpha family. G(q) subfamily. G proteins are composed of 3 units; alpha, beta and gamma. The alpha chain contains the guanine nucleotide binding site. Interacts (GDP-bound form) with RIC8A (via C-terminus); promoting GNAQ folding and association with the plasma membrane. Binds NHERF1. Forms a complex with PECAM1 and BDKRB2. Interacts with GAS2L2. Post-translationally, palmitoylated by ZDHHC3 and ZDHHC7. Palmitoylation occurs in the Golgi and participates in the localization of GNAQ to the plasma membrane. Histaminylated at Gln-209 residues by TGM2.

The protein resides in the cell membrane. It localises to the golgi apparatus. It is found in the nucleus. The protein localises to the nucleus membrane. It catalyses the reaction GTP + H2O = GDP + phosphate + H(+). Functionally, guanine nucleotide-binding proteins (G proteins) function as transducers downstream of G protein-coupled receptors (GPCRs) in numerous signaling cascades. The alpha chain contains the guanine nucleotide binding site and alternates between an active, GTP-bound state and an inactive, GDP-bound state. Signaling by an activated GPCR promotes GDP release and GTP binding. The alpha subunit has a low GTPase activity that converts bound GTP to GDP, thereby terminating the signal. Both GDP release and GTP hydrolysis are modulated by numerous regulatory proteins. Signaling is mediated via phospholipase C-beta-dependent inositol lipid hydrolysis for signal propagation: activates phospholipase C-beta: following GPCR activation, GNAQ activates PLC-beta (PLCB1, PLCB2, PLCB3 or PLCB4), leading to production of diacylglycerol (DAG) and inositol 1,4,5-trisphosphate (IP3). Required for platelet activation. Regulates B-cell selection and survival and is required to prevent B-cell-dependent autoimmunity. Regulates chemotaxis of BM-derived neutrophils and dendritic cells (in vitro). Transduces FFAR4 signaling in response to long-chain fatty acids (LCFAs). Together with GNA11, required for heart development. This chain is Guanine nucleotide-binding protein G(q) subunit alpha (GNAQ), found in Canis lupus familiaris (Dog).